The chain runs to 269 residues: MKSVLLTRNIQENNETIQEINKYNLDLRYIHCSLIKYKTLDFNINILNNYSNIIITSKYAAHILADYNLKQDIWVVGNKTKQLLGKKVIYTANNIADLIQHFPTDLYKHTIYLSSNEITQDLPNKIARHIIYNVEYLNELPISIIQEFENIRYFSKPAYRNAFKANTIRATTAYKKVFNDPSLGSTYPLEVPLGKMSIDFILLYSQNSAKTLVRLLLQNNLLQYLQDSLVIAISLKVANIVRPFIKNVVYCDNQSPHDIIKLLYENAKI.

The 46-residue stretch at 152 to 197 (RYFSKPAYRNAFKANTIRATTAYKKVFNDPSLGSTYPLEVPLGKMS) folds into the RPE1 insert domain.

This is an uncharacterized protein from Rickettsia prowazekii (strain Madrid E).